A 762-amino-acid polypeptide reads, in one-letter code: Centrosomal protein of 85 kDa (762 aa).

2 disordered regions span residues 1-26 and 94-119; these read MAMQ…IQKG and VMPS…SKLP. Composition is skewed to polar residues over residues 14–26 and 98–111; these read HVTS…IQKG and TLGT…STPV. A Phosphoserine modification is found at Ser17. 2 positions are modified to phosphoserine: Ser126 and Ser141. The interval 257-433 is mediates interaction with NEK2 and is required for its function in the suppression of centrosome disjunction; that stretch reads GLSKPLPSQV…QLIRESLKVA (177 aa). Coiled coils occupy residues 334-657 and 723-750; these read EHLL…RQAQ and PDVI…MSDR. Residues 434 to 476 are required for centrosome localization and for its function in the suppression of centrosome disjunction; that stretch reads LQKHSEEVKKQEERVKGRDKHINNLKKKCQKESEQNREKQQRI. Composition is skewed to basic and acidic residues over residues 443–455 and 463–474; these read KQEE…DKHI and QKESEQNREKQQ. Disordered regions lie at residues 443 to 474 and 541 to 570; these read KQEE…EKQQ and EAEF…VEME. Residue Ser623 is modified to Phosphoserine.

The protein belongs to the CEP85 family. Homodimer. Interacts with STIL (via N-terminus); this interaction is essential for robust PLK4 activation and efficient centriole assembly and for PLK4-dependent cell migration. Interacts with PLK4; required for CEP85 to be able to drive centriole duplication and cell migration.

Its subcellular location is the cytoplasm. The protein resides in the cytoskeleton. It is found in the microtubule organizing center. It localises to the centrosome. The protein localises to the spindle pole. Its subcellular location is the nucleus. The protein resides in the nucleolus. It is found in the centriole. It localises to the cell cortex. Acts as a regulator of centriole duplication through a direct interaction with STIL, a key factor involved in the early steps of centriole formation. The CEP85-STIL protein complex acts as a modulator of PLK4-driven cytoskeletal rearrangements and directional cell motility. Acts as a negative regulator of NEK2 to maintain the centrosome integrity in interphase. Suppresses centrosome disjunction by inhibiting NEK2 kinase activity. The polypeptide is Centrosomal protein of 85 kDa (Homo sapiens (Human)).